A 769-amino-acid polypeptide reads, in one-letter code: Zinc finger protein 585B (769 aa).

Residues 1 to 12 (MPASWTSPQKSS) are compositionally biased toward polar residues. Residues 1–23 (MPASWTSPQKSSALAPDDHGSSY) form a disordered region. A KRAB domain is found at 27–97 (VSFRDVVINF…QGERPRHSCP (71 aa)). 21 C2H2-type zinc fingers span residues 158–180 (YVCIECGRAFVQKPEFITHQKAH), 186–208 (YKCNECGKSVFQVSSLFRHQRIH), 214–236 (YQCSECGKGFPYNSDLSIHEKIH), 242–264 (HECTDCGKAFTQRSTLKMHQKIH), 270–292 (YICIECGQAFIQKTQLIAHRRIH), 298–320 (YECNNCGKSFISKSQLEVHQRIH), 354–376 (SICTECGKAFTYRSELIIHQRIH), 382–404 (YACSDCGKAFTQKSTLTVHQRIH), 410–432 (YVCMKCGLAFIRKAHLVTHQIIH), 438–460 (YKCGHCGKLFTSKSQLHVHKRIH), 466–488 (YVCNKCGKAFTNRSDLITHQKTH), 494–516 (YICSKCGKAFTQRSDLITHQRIH), 522–544 (YECNTCGKAFTQKSNLNIHQKIH), 550–572 (YECHECGKAFNQKSILIVHQKIH), 578–600 (YVCTECGRAFIRKSNFITHQRIH), 606–628 (YECSDCGKSFTSKSQLLVHQPLH), 634–656 (YVCAECGKAFSGRSNLSKHQKTH), 662–684 (YICSECGKTFRQKSELITHHRIH), 690–712 (YECSDCGKSFTKKSQLQVHQRIH), 718–740 (YVCAECGKAFSNRSNLNKHQTTH), and 746–768 (YKCGICGKGFVQKSVFSVHQGSH).

Belongs to the krueppel C2H2-type zinc-finger protein family.

The protein localises to the nucleus. Its function is as follows. May be involved in transcriptional regulation. The chain is Zinc finger protein 585B (ZNF585B) from Pongo abelii (Sumatran orangutan).